We begin with the raw amino-acid sequence, 94 residues long: Neutrophil antibiotic peptide NP-2 (94 aa).

An N-terminal signal peptide occupies residues 1 to 19 (MRTLTLLTALLLLALHTQA). The propeptide occupies 20–62 (KSPQGTAEEAPDQEQLVMEDQDISISFGGDKGTALQDADVKAG). Disulfide bonds link C65–C93, C67–C82, and C72–C92.

This sequence belongs to the alpha-defensin family. In terms of tissue distribution, highest expression in bone marrow and to a much lesser extent in small intestine.

It localises to the secreted. Functionally, active in vitro against S.aureus, fungi, Gram-positive and Gram-negative bacteria and to a lesser extent against an enveloped virus. The sequence is that of Neutrophil antibiotic peptide NP-2 (Defa) from Rattus norvegicus (Rat).